A 55-amino-acid polypeptide reads, in one-letter code: MPQLNPAPWFSIMIMTWLTLALLIQPKLLTFTTTNPPSSKPSLTTKPTPWAWPWT.

The helical transmembrane segment at 7–24 (APWFSIMIMTWLTLALLI) threads the bilayer. A disordered region spans residues 34-55 (TNPPSSKPSLTTKPTPWAWPWT).

Belongs to the ATPase protein 8 family. As to quaternary structure, component of the ATP synthase complex composed at least of ATP5F1A/subunit alpha, ATP5F1B/subunit beta, ATP5MC1/subunit c (homooctomer), MT-ATP6/subunit a, MT-ATP8/subunit 8, ATP5ME/subunit e, ATP5MF/subunit f, ATP5MG/subunit g, ATP5MK/subunit k, ATP5MJ/subunit j, ATP5F1C/subunit gamma, ATP5F1D/subunit delta, ATP5F1E/subunit epsilon, ATP5PF/subunit F6, ATP5PB/subunit b, ATP5PD/subunit d, ATP5PO/subunit OSCP. ATP synthase complex consists of a soluble F(1) head domain (subunits alpha(3) and beta(3)) - the catalytic core - and a membrane F(0) domain - the membrane proton channel (subunits c, a, 8, e, f, g, k and j). These two domains are linked by a central stalk (subunits gamma, delta, and epsilon) rotating inside the F1 region and a stationary peripheral stalk (subunits F6, b, d, and OSCP).

The protein localises to the mitochondrion membrane. Functionally, subunit 8, of the mitochondrial membrane ATP synthase complex (F(1)F(0) ATP synthase or Complex V) that produces ATP from ADP in the presence of a proton gradient across the membrane which is generated by electron transport complexes of the respiratory chain. ATP synthase complex consist of a soluble F(1) head domain - the catalytic core - and a membrane F(1) domain - the membrane proton channel. These two domains are linked by a central stalk rotating inside the F(1) region and a stationary peripheral stalk. During catalysis, ATP synthesis in the catalytic domain of F(1) is coupled via a rotary mechanism of the central stalk subunits to proton translocation. In vivo, can only synthesize ATP although its ATP hydrolase activity can be activated artificially in vitro. Part of the complex F(0) domain. This is ATP synthase F(0) complex subunit 8 from Aythya americana (Redhead).